Reading from the N-terminus, the 272-residue chain is Dihydropteroate synthase (272 aa).

One can recognise a Pterin-binding domain in the interval 1-256 (MIKTKIMGIL…NVLLNTRLAQ (256 aa)). Asn11 contributes to the Mg(2+) binding site. (7,8-dihydropterin-6-yl)methyl diphosphate contacts are provided by residues Thr51, Asp89, Asn108, Asp172, Lys208, and 244–246 (RVH).

It belongs to the DHPS family. Homodimer. It depends on Mg(2+) as a cofactor.

It carries out the reaction (7,8-dihydropterin-6-yl)methyl diphosphate + 4-aminobenzoate = 7,8-dihydropteroate + diphosphate. It participates in cofactor biosynthesis; tetrahydrofolate biosynthesis; 7,8-dihydrofolate from 2-amino-4-hydroxy-6-hydroxymethyl-7,8-dihydropteridine diphosphate and 4-aminobenzoate: step 1/2. Its function is as follows. Catalyzes the condensation of para-aminobenzoate (pABA) with 6-hydroxymethyl-7,8-dihydropterin diphosphate (DHPt-PP) to form 7,8-dihydropteroate (H2Pte), the immediate precursor of folate derivatives. The polypeptide is Dihydropteroate synthase (folP) (Staphylococcus epidermidis (strain ATCC 12228 / FDA PCI 1200)).